A 1342-amino-acid polypeptide reads, in one-letter code: DNA-directed RNA polymerase subunit beta (1342 aa).

Belongs to the RNA polymerase beta chain family. The RNAP catalytic core consists of 2 alpha, 1 beta, 1 beta' and 1 omega subunit. When a sigma factor is associated with the core the holoenzyme is formed, which can initiate transcription.

It carries out the reaction RNA(n) + a ribonucleoside 5'-triphosphate = RNA(n+1) + diphosphate. Its function is as follows. DNA-dependent RNA polymerase catalyzes the transcription of DNA into RNA using the four ribonucleoside triphosphates as substrates. The protein is DNA-directed RNA polymerase subunit beta of Aeromonas salmonicida (strain A449).